Here is a 372-residue protein sequence, read N- to C-terminus: UDP-2-acetamido-2,6-beta-L-arabino-hexul-4-ose reductase (372 aa).

NAD(+)-binding positions include 7-30 (GANG…EVVP), Leu-53, Tyr-103, and Lys-107. The active-site Proton acceptor is the Tyr-103. Substrate contacts are provided by residues Asn-132 and 279 to 282 (HPGV).

This sequence belongs to the NAD(P)-dependent epimerase/dehydratase family. As to quaternary structure, homodimer.

The catalysed reaction is UDP-2-acetamido-2,6-dideoxy-beta-L-arabino-hex-4-ulose + NADH + H(+) = UDP-2-acetamido-2,6-dideoxy-beta-L-talose + NAD(+). It catalyses the reaction UDP-2-acetamido-2,6-dideoxy-beta-L-arabino-hex-4-ulose + NADPH + H(+) = UDP-2-acetamido-2,6-dideoxy-beta-L-talose + NADP(+). Its pathway is bacterial outer membrane biogenesis; LPS O-antigen biosynthesis. Functionally, bifunctional enzyme that mediates C-3 epimerization of the second intermediate followed by reduction at C-4 during serogroup O11 O-antigen biosynthesis, thus catalyzing the conversion of UDP-N-acetyl-D-glucosamine to precursors for the biosynthesis of O antigen. The sequence is that of UDP-2-acetamido-2,6-beta-L-arabino-hexul-4-ose reductase from Pseudomonas aeruginosa (strain ATCC 29260 / BCRC 12902 / CIP 102967 / NCIMB 11965 / PA103).